The primary structure comprises 368 residues: Agmatine deiminase (368 aa).

The Amidino-cysteine intermediate role is filled by Cys357.

It belongs to the agmatine deiminase family. In terms of assembly, homodimer.

The enzyme catalyses agmatine + H2O = N-carbamoylputrescine + NH4(+). The protein operates within amine and polyamine biosynthesis; putrescine biosynthesis via agmatine pathway; N-carbamoylputrescine from agmatine: step 1/1. Functionally, mediates the hydrolysis of agmatine into N-carbamoylputrescine in the arginine decarboxylase (ADC) pathway of putrescine biosynthesis, a basic polyamine. The protein is Agmatine deiminase of Pseudomonas syringae pv. tomato (strain ATCC BAA-871 / DC3000).